The primary structure comprises 506 residues: Histidine ammonia-lyase (506 aa).

The 5-imidazolinone (Ala-Gly) cross-link spans 144–146 (ASG). S145 carries the 2,3-didehydroalanine (Ser) modification.

Belongs to the PAL/histidase family. Post-translationally, contains an active site 4-methylidene-imidazol-5-one (MIO), which is formed autocatalytically by cyclization and dehydration of residues Ala-Ser-Gly.

It localises to the cytoplasm. It catalyses the reaction L-histidine = trans-urocanate + NH4(+). The protein operates within amino-acid degradation; L-histidine degradation into L-glutamate; N-formimidoyl-L-glutamate from L-histidine: step 1/3. This chain is Histidine ammonia-lyase, found in Legionella pneumophila (strain Lens).